The sequence spans 241 residues: Corrinoid adenosyltransferase MMAB (241 aa).

Residues 1 to 26 (MAVWGPGGRLGLRGCLGARKLLCPRF) constitute a mitochondrion transit peptide. The segment at 27–69 (QSRGPQGVEDGDRPQPSSKTPKVPKIYTKTGDKGFSSTFTGER) is disordered. ATP contacts are provided by residues 54–63 (TKTGDKGFSS) and K72. S128 is modified (phosphoserine). ATP is bound at residue 184–188 (RRAER). N6-succinyllysine is present on K205. ATP is bound at residue N208. K224 is subject to N6-acetyllysine; alternate. K224 carries the post-translational modification N6-succinyllysine; alternate.

This sequence belongs to the Cob(I)alamin adenosyltransferase family. Homotrimer.

It localises to the mitochondrion. It catalyses the reaction cob(I)alamin-[corrinoid adenosyltransferase] + ATP = apo-[corrinoid adenosyltransferase] + adenosylcob(III)alamin + triphosphate. In terms of biological role, converts cob(I)alamin to adenosylcobalamin (adenosylcob(III)alamin), a coenzyme for methylmalonyl-CoA mutase, therefore participates in the final step of the vitamin B12 conversion. Generates adenosylcobalamin (AdoCbl) and directly delivers the cofactor to MUT in a transfer that is stimulated by ATP-binding to MMAB and gated by MMAA. This chain is Corrinoid adenosyltransferase MMAB, found in Bos taurus (Bovine).